Here is a 146-residue protein sequence, read N- to C-terminus: Suppressor APC domain-containing protein 1 (146 aa).

Positions 121-146 (HRKGVTQSTGEVVSQAPPGPKGPTLV) are disordered. Residues 137-146 (PPGPKGPTLV) are compositionally biased toward pro residues.

The chain is Suppressor APC domain-containing protein 1 (Sapcd1) from Mus musculus (Mouse).